The chain runs to 381 residues: Fatty acid elongase 6 (381 aa).

A run of 7 helical transmembrane segments spans residues 10-30 (IAAA…LVYS), 69-89 (LPYL…SLIV), 107-127 (GLVH…GLMI), 153-173 (LIWL…IMLL), 182-202 (FLHV…LLVA), 216-236 (GVHV…SGIV), and 280-300 (LLQI…NFLV). Positions 184 to 188 (HVYHH) match the HxxHH motif motif. Residue His187 is the Nucleophile of the active site. The segment at 362–381 (RKNGNGNGQKASLQAMAGSR) is disordered.

This sequence belongs to the ELO family.

The protein resides in the membrane. It participates in lipid metabolism; polyunsaturated fatty acid biosynthesis. Involved in the synthesis of fatty acids. Elongates C18 polyunsaturated fatty acids (PUFAs) with a preference for Delta6 PUFAs. The polypeptide is Fatty acid elongase 6 (Leishmania major).